Here is a 196-residue protein sequence, read N- to C-terminus: MILLVGLGNPGKAYAGNRHNIGFMALDQIARDYSAPPFRSKFNGLISEITLAGERCVLLAPQTYMNDSGRSVGEAARYLKIEPKDIVVLHDELDLPAGKVRVKTGGGNAGHNGLKSITAHIGNEYRRVRLGIGHPGDRALVHNYVLGDFAKSEAAWVEALCKAVAASAPLLAKGEDDAFQTKIFKDMEAALGKNVP.

Tyr14 lines the tRNA pocket. The active-site Proton acceptor is the His19. 3 residues coordinate tRNA: Tyr64, Asn66, and Asn112.

Belongs to the PTH family. In terms of assembly, monomer.

The protein resides in the cytoplasm. It catalyses the reaction an N-acyl-L-alpha-aminoacyl-tRNA + H2O = an N-acyl-L-amino acid + a tRNA + H(+). In terms of biological role, hydrolyzes ribosome-free peptidyl-tRNAs (with 1 or more amino acids incorporated), which drop off the ribosome during protein synthesis, or as a result of ribosome stalling. Its function is as follows. Catalyzes the release of premature peptidyl moieties from peptidyl-tRNA molecules trapped in stalled 50S ribosomal subunits, and thus maintains levels of free tRNAs and 50S ribosomes. This chain is Peptidyl-tRNA hydrolase, found in Methylocella silvestris (strain DSM 15510 / CIP 108128 / LMG 27833 / NCIMB 13906 / BL2).